The following is a 154-amino-acid chain: Catabolic 3-dehydroquinase (154 aa).

Residue Y25 is the Proton acceptor of the active site. Substrate-binding residues include N79, H85, and D92. The active-site Proton donor is H105. Substrate is bound by residues 106–107 and R116; that span reads IS.

It belongs to the type-II 3-dehydroquinase family. In terms of assembly, homododecamer. Adopts a ring-like structure, composed of an arrangement of two hexameric rings stacked on top of one another.

The catalysed reaction is 3-dehydroquinate = 3-dehydroshikimate + H2O. The protein operates within aromatic compound metabolism; 3,4-dihydroxybenzoate biosynthesis; 3,4-dihydroxybenzoate from 3-dehydroquinate: step 1/2. Its function is as follows. Is involved in the catabolism of quinate. Allows the utilization of quinate as carbon source via the beta-ketoadipate pathway. In Sclerotinia sclerotiorum (strain ATCC 18683 / 1980 / Ss-1) (White mold), this protein is Catabolic 3-dehydroquinase.